Consider the following 405-residue polypeptide: MVSIITFTKNVLVTLAFALLAQGLAIPEDIDKRAEKVVSLDFTVTRKPFNATAHGQHHQSQQQQQQQQQQPAQKRGTVQTSLINEGPSYAATITVGSNKQQQTVIVDTGSSDLWVVDSAAVCQVTYPGQSPTFCKQDGTYKPSSSTTSQNLGKAFSIRYEDGSSSQGTVYKDTIGLGGASITNQQFADVTTTSVDQGILGIGFTGDESSPTYDNVPVTLKKQGIINKNAYSLYLNSASASSGTIIFGGVDNAKYTGSLTALPITSSNELRVQLSTINIAGTTVSASTTPVLDSGTTLTYFSQTIADKLAAAVGAKWNSYYQLYTSSCNLAGNIVFNFAKGVTISVPLSEFVLQDGNSCYFGVSRDSATILGDNFLRRAYAVYDLDGNTISLAQVKYTTSSSISTL.

The signal sequence occupies residues 1 to 25 (MVSIITFTKNVLVTLAFALLAQGLA). Asn-50 carries N-linked (GlcNAc...) asparagine glycosylation. Residues 52–78 (TAHGQHHQSQQQQQQQQQQPAQKRGTV) are disordered. Residues 58–70 (HQSQQQQQQQQQQ) show a composition bias toward low complexity. The region spanning 89–392 (YAATITVGSN…DLDGNTISLA (304 aa)) is the Peptidase A1 domain. Asp-107 is an active-site residue. A pepstatin A-binding site is contributed by 107-109 (DTG). Cys-122 and Cys-134 are joined by a disulfide. Asp-292 is an active-site residue. 292–296 (DSGTT) contacts pepstatin A. Cys-327 and Cys-358 are oxidised to a cystine.

Belongs to the peptidase A1 family. As to quaternary structure, monomer.

Its subcellular location is the secreted. The catalysed reaction is Preferential cleavage at the carboxyl of hydrophobic amino acids, but fails to cleave 15-Leu-|-Tyr-16, 16-Tyr-|-Leu-17 and 24-Phe-|-Phe-25 of insulin B chain. Activates trypsinogen, and degrades keratin.. Functionally, secreted aspartic peptidases (SAPs) are a group of ten acidic hydrolases considered as key virulence factors. These enzymes supply the fungus with nutrient amino acids as well as are able to degrade the selected host's proteins involved in the immune defense. Moreover, acts toward human hemoglobin though limited proteolysis to generate a variety of antimicrobial hemocidins, enabling to compete with the other microorganisms of the same physiological niche using the microbicidal peptides generated from the host protein. Its function is as follows. Plays a key role in defense against host by cleaving histatin-5 (Hst 5), a peptide from human saliva that carries out fungicidal activity. The cleavage rate decreases in an order of SAP2 &gt; SAP9 &gt; SAP3 &gt; SAP7 &gt; SAP4 &gt; SAP1 &gt; SAP8. The hydrolysis of Hst 5 by SAP8 causes production of the DSHAKRHHGY, HHSHRGY and FHEKHHSHRGY peptides. The chain is Secreted aspartic protease 8 from Candida albicans (Yeast).